Here is a 130-residue protein sequence, read N- to C-terminus: Protein ApaG (130 aa).

The ApaG domain occupies 3 to 127; sequence KAETRGISVI…FSLDVPHMRR (125 aa).

In Methylobacterium nodulans (strain LMG 21967 / CNCM I-2342 / ORS 2060), this protein is Protein ApaG.